The chain runs to 131 residues: Holo-[acyl-carrier-protein] synthase (131 aa).

Mg(2+)-binding residues include Asp8 and Glu63.

Belongs to the P-Pant transferase superfamily. AcpS family. Mg(2+) serves as cofactor.

The protein resides in the cytoplasm. The catalysed reaction is apo-[ACP] + CoA = holo-[ACP] + adenosine 3',5'-bisphosphate + H(+). In terms of biological role, transfers the 4'-phosphopantetheine moiety from coenzyme A to a Ser of acyl-carrier-protein. This chain is Holo-[acyl-carrier-protein] synthase, found in Shewanella halifaxensis (strain HAW-EB4).